Here is a 131-residue protein sequence, read N- to C-terminus: Methylglyoxal synthase (131 aa).

Residues 1 to 131 enclose the MGS-like domain; it reads MKIALIAHDK…GDLDYRKFRK (131 aa). Residues histidine 8, lysine 12, 34 to 37, and 54 to 55 each bind substrate; these read TGTT and SG. The Proton donor/acceptor role is filled by aspartate 60. Residue histidine 87 coordinates substrate.

Belongs to the methylglyoxal synthase family.

The enzyme catalyses dihydroxyacetone phosphate = methylglyoxal + phosphate. In terms of biological role, catalyzes the formation of methylglyoxal from dihydroxyacetone phosphate. In Bacillus cytotoxicus (strain DSM 22905 / CIP 110041 / 391-98 / NVH 391-98), this protein is Methylglyoxal synthase.